Reading from the N-terminus, the 244-residue chain is L-xylulose reductase (244 aa).

M1 carries the post-translational modification N-acetylmethionine. Position 11-40 (11-40) interacts with NADP(+); that stretch reads LVTGAGKGIGRGTVQALHATGARVVAVSRT. R21 bears the Omega-N-methylarginine mark. S46 is subject to Phosphoserine. Residue S136 participates in substrate binding. The active-site Proton acceptor is the Y149. Residue K153 coordinates NADP(+).

Belongs to the short-chain dehydrogenases/reductases (SDR) family. Homotetramer. As to expression, highly expressed in kidney, liver and epididymis. In the epididymis, it is mainly expressed in the proximal and distal sections of the corpus region. Weakly or not expressed in brain, lung, heart, spleen and testis.

It localises to the membrane. It carries out the reaction xylitol + NADP(+) = L-xylulose + NADPH + H(+). Functionally, catalyzes the NADPH-dependent reduction of several pentoses, tetroses, trioses, alpha-dicarbonyl compounds and L-xylulose. Participates in the uronate cycle of glucose metabolism. May play a role in the water absorption and cellular osmoregulation in the proximal renal tubules by producing xylitol, an osmolyte, thereby preventing osmolytic stress from occurring in the renal tubules. The polypeptide is L-xylulose reductase (DCXR) (Homo sapiens (Human)).